Reading from the N-terminus, the 882-residue chain is E3 ubiquitin-protein ligase SH3RF3 (882 aa).

The interval 18-42 is disordered; that stretch reads AQSEGDEDRPGERRRRRAAATAAGA. The segment at 57–98 adopts an RING-type zinc-finger fold; the sequence is CSVCLERLDTTAKVLPCQHTFCRRCLESIVCSRHELRCPECR. The disordered stretch occupies residues 124–159; the sequence is RPRAGTSPGGSPPARPIPGQSAAPTLAGGGGGAAGS. 2 SH3 domains span residues 194–253 and 256–319; these read CLLP…CIQP and HAPP…LNDS. The segment at 368–399 is disordered; it reads RRVDGKKNTKKRHSFTALSVTHRSSQAASHRH. Residues 369-439 are interaction with RAC1; that stretch reads RVDGKKNTKK…APTQDVSSSA (71 aa). Position 400 is a phosphoserine (serine 400). The span at 433–444 shows a compositional bias: polar residues; it reads QDVSSSAGSTPT. The tract at residues 433-458 is disordered; the sequence is QDVSSSAGSTPTAVPRAASVSGEQGT. Residues 464-525 enclose the SH3 3 domain; the sequence is LPLNVYLALY…PGNYVTPVSR (62 aa). Composition is skewed to polar residues over residues 575 to 588, 596 to 635, and 697 to 706; these read PQAH…SPPT, AQPT…NSPS, and LSTSSPTNTG. Disordered stretches follow at residues 575 to 664 and 693 to 747; these read PQAH…CPRP and PIGV…PTHD. Residues 708 to 721 show a composition bias toward basic and acidic residues; sequence KLDEKKSEKKEKKS. Serine 797 is modified (phosphoserine). The 60-residue stretch at 823 to 882 folds into the SH3 4 domain; the sequence is LPRERYRVVVSYPPQSEAEIELKEGDIVFVHKKREDGWYKGTLQRNGRTGLFPGSFVESF.

This sequence belongs to the SH3RF family. In terms of assembly, interacts (via SH3 domain 3) with PAK2. Interacts with RAC1 (GTP-bound form). In terms of processing, autoubiquitinated.

The catalysed reaction is S-ubiquitinyl-[E2 ubiquitin-conjugating enzyme]-L-cysteine + [acceptor protein]-L-lysine = [E2 ubiquitin-conjugating enzyme]-L-cysteine + N(6)-ubiquitinyl-[acceptor protein]-L-lysine.. It participates in protein modification; protein ubiquitination. Functionally, has E3 ubiquitin-protein ligase activity. In Homo sapiens (Human), this protein is E3 ubiquitin-protein ligase SH3RF3 (SH3RF3).